A 494-amino-acid polypeptide reads, in one-letter code: Cardiolipin synthase (494 aa).

2 helical membrane-spanning segments follow: residues 14-34 (IILN…AFTI) and 45-65 (IWAW…LYLL). PLD phosphodiesterase domains lie at 229–256 (MNNR…GDEY) and 407–434 (DNGF…DHRS). Active-site residues include His-234, Lys-236, Asp-241, His-412, Lys-414, and Asp-419.

The protein belongs to the phospholipase D family. Cardiolipin synthase subfamily.

It localises to the cell membrane. The enzyme catalyses 2 a 1,2-diacyl-sn-glycero-3-phospho-(1'-sn-glycerol) = a cardiolipin + glycerol. Functionally, catalyzes the reversible phosphatidyl group transfer from one phosphatidylglycerol molecule to another to form cardiolipin (CL) (diphosphatidylglycerol) and glycerol. This chain is Cardiolipin synthase (cls), found in Staphylococcus aureus (strain Mu50 / ATCC 700699).